The following is a 763-amino-acid chain: DNA-binding protein SATB1 (763 aa).

Residues 1–15 (MDHLNEATQGKEHSE) are compositionally biased toward basic and acidic residues. A disordered region spans residues 1 to 54 (MDHLNEATQGKEHSEMSNNVSDPKGPPAKIARLEQNGSPLGRGRLGSTGAKMQG). A Nuclear localization signal motif is present at residues 20-40 (VSDPKGPPAKIARLEQNGSPL). Residue Lys51 forms a Glycyl lysine isopeptide (Lys-Gly) (interchain with G-Cter in SUMO2) linkage. Positions 71–172 (GTMLPVFCVV…VVTLKIQLHS (102 aa)) constitute a CMP domain. Lys136 is subject to N6-acetyllysine. The Protein interaction signature appears at 139 to 143 (PVPLS). The region spanning 175 to 248 (KLEDLPPEQW…WYKHFKKTKD (74 aa)) is the CUTL domain. Ser185 bears the Phosphoserine mark. Residues 224–278 (YYANVSAAKCQEFGRWYKHFKKTKDMMVEMDSLSELSQQGANHVNFGQQPVPGNT) form a nuclear matrix targeting sequence (NMTS) region. Residues 266–296 (HVNFGQQPVPGNTAEQPPSPAQLSHGSQPSV) are compositionally biased toward polar residues. The interval 266 to 307 (HVNFGQQPVPGNTAEQPPSPAQLSHGSQPSVRTPLPNLHPGL) is disordered. 2 consecutive DNA-binding regions (CUT) follow at residues 361–448 (LEQQ…QDER) and 484–571 (NGKP…EQES). DNA contacts are provided by residues Gln390, 400–410 (RTQGLLSEILR), and Asn425. Over residues 591–607 (QIQQQQQQQQQQQQQQQ) the composition is skewed to low complexity. A disordered region spans residues 591-649 (QIQQQQQQQQQQQQQQQAPPPPQPQQQPQTGPRLPPRQPTVASPAESDEENRQKTRPRT). The residue at position 637 (Ser637) is a Phosphoserine. The segment at residues 645–704 (TRPRTKISVEALGILQSFIQDVGLYPDEEAIQTLSAQLDLPKYTIIKFFQNQRYYLKHHG) is a DNA-binding region (homeobox). Lys744 is covalently cross-linked (Glycyl lysine isopeptide (Lys-Gly) (interchain with G-Cter in SUMO)).

This sequence belongs to the CUT homeobox family. As to quaternary structure, interacts with CUX1 (via DNA-binding domains); the interaction inhibits the attachment of both proteins to DNA. Homodimer. Part of the nuclear protein complex gamma-globin promoter and enhancer binding factor (gamma-PE) composed at least of SATB1 and HOXB2. Interaction with CtBP1 when not acetylated stabilizes attachment to DNA and promotes transcription repression. Interacts with PCAF. Interacts with sumoylated PML and HDAC1 via the CMP domain. Interacts also with DYNLT3 and POLR2J2. Binds to EP300. In terms of assembly, (Microbial infection) Interacts (via the CMP domain) with HIV-1 Tat. In terms of processing, sumoylated. Sumoylation promotes cleavage by caspases. Phosphorylated by PKC. Acetylated by PCAF. Phosphorylated form interacts with HDAC1, but unphosphorylated form interacts with PCAF. DNA binding properties are activated by phosphorylation and inactivated by acetylation. In opposition, gene expression is down-regulated by phosphorylation but up-regulated by acetylation. Post-translationally, cleaved at Asp-254 by caspase-3 and caspase-6 during T-cell apoptosis in thymus and during B-cell stimulation. The cleaved forms cannot dimerize and lose transcription regulation function because of impaired DNA and chromatin association. As to expression, expressed predominantly in thymus.

Its subcellular location is the nucleus matrix. The protein localises to the nucleus. It is found in the PML body. Functionally, crucial silencing factor contributing to the initiation of X inactivation mediated by Xist RNA that occurs during embryogenesis and in lymphoma. Binds to DNA at special AT-rich sequences, the consensus SATB1-binding sequence (CSBS), at nuclear matrix- or scaffold-associated regions. Thought to recognize the sugar-phosphate structure of double-stranded DNA. Transcriptional repressor controlling nuclear and viral gene expression in a phosphorylated and acetylated status-dependent manner, by binding to matrix attachment regions (MARs) of DNA and inducing a local chromatin-loop remodeling. Acts as a docking site for several chromatin remodeling enzymes (e.g. PML at the MHC-I locus) and also by recruiting corepressors (HDACs) or coactivators (HATs) directly to promoters and enhancers. Modulates genes that are essential in the maturation of the immune T-cell CD8SP from thymocytes. Required for the switching of fetal globin species, and beta- and gamma-globin genes regulation during erythroid differentiation. Plays a role in chromatin organization and nuclear architecture during apoptosis. Interacts with the unique region (UR) of cytomegalovirus (CMV). Alu-like motifs and SATB1-binding sites provide a unique chromatin context which seems preferentially targeted by the HIV-1 integration machinery. Moreover, HIV-1 Tat may overcome SATB1-mediated repression of IL2 and IL2RA (interleukin) in T-cells by binding to the same domain than HDAC1. Delineates specific epigenetic modifications at target gene loci, directly up-regulating metastasis-associated genes while down-regulating tumor-suppressor genes. Reprograms chromatin organization and the transcription profiles of breast tumors to promote growth and metastasis. Promotes neuronal differentiation of neural stem/progenitor cells in the adult subventricular zone, possibly by positively regulating the expression of NEUROD1. This chain is DNA-binding protein SATB1, found in Homo sapiens (Human).